The following is a 207-amino-acid chain: Large ribosomal subunit protein uL4 (207 aa).

The disordered stretch occupies residues 44 to 81 (KRQGTQSAKTRSEVRGGGRKPWRQKGTGRARQGSIRSP). The segment covering 60–71 (GGRKPWRQKGTG) has biased composition (basic residues).

The protein belongs to the universal ribosomal protein uL4 family. In terms of assembly, part of the 50S ribosomal subunit.

In terms of biological role, one of the primary rRNA binding proteins, this protein initially binds near the 5'-end of the 23S rRNA. It is important during the early stages of 50S assembly. It makes multiple contacts with different domains of the 23S rRNA in the assembled 50S subunit and ribosome. Functionally, forms part of the polypeptide exit tunnel. The sequence is that of Large ribosomal subunit protein uL4 from Finegoldia magna (strain ATCC 29328 / DSM 20472 / WAL 2508) (Peptostreptococcus magnus).